Reading from the N-terminus, the 318-residue chain is NADH-ubiquinone oxidoreductase chain 1 (318 aa).

The next 8 membrane-spanning stretches (helical) occupy residues 2–22 (LLTN…FLTL), 69–89 (LMFI…WAPL), 102–122 (ILFI…SGWA), 147–167 (AIIL…TLTI), 172–192 (MWLI…TLAE), 231–251 (IILM…NPLF), 253–273 (ELHT…FLWI), and 294–314 (LPLT…LAGI).

This sequence belongs to the complex I subunit 1 family.

It is found in the mitochondrion inner membrane. It catalyses the reaction a ubiquinone + NADH + 5 H(+)(in) = a ubiquinol + NAD(+) + 4 H(+)(out). Core subunit of the mitochondrial membrane respiratory chain NADH dehydrogenase (Complex I) that is believed to belong to the minimal assembly required for catalysis. Complex I functions in the transfer of electrons from NADH to the respiratory chain. The immediate electron acceptor for the enzyme is believed to be ubiquinone. In Bradypus variegatus (Brown-throated three-fingered sloth), this protein is NADH-ubiquinone oxidoreductase chain 1 (MT-ND1).